The sequence spans 412 residues: MSNYSHSSNNPFLKVSTKEDKPSSFHKIAEDEEYEVTSPTDATFRASKNADNSAGGNNPLESGRAGESGDGIRFGRDPFGNFQGGAEGQDESSIDPNGFRPTGGPDHGFPNNYALGRRTSVSAESLNPTSAGSDSWTPPSHPKSEEQLARLKTAVSNNFLFSHLDDEQSRTVLDALVEKPIPAKDIKVISQGDAGDYFYIVEEGHFDVYINPSGSVQPGPDGAGTKISTIGPGGSFGELALMYNAPRAATIVSTEPKSTLWALDRITFRRILMDSAFQRRRMYEAFLEEVPLLSSLKPYERAKIADALDTIKFPAGEYIIKEGDPGDAFYLLESGEAEAFMEGVEEPVKSYKRGDYFGELALLDDKPRAASVRAKTEVKVAKLGRDGFKRLLGPVENIMRRTEYSSRPSTAT.

The span at 1-11 shows a compositional bias: polar residues; that stretch reads MSNYSHSSNNP. A disordered region spans residues 1-146; the sequence is MSNYSHSSNN…TPPSHPKSEE (146 aa). The segment covering 16–29 has biased composition (basic and acidic residues); that stretch reads STKEDKPSSFHKIA. The tract at residues 23–159 is dimerization and phosphorylation; the sequence is SSFHKIAEDE…RLKTAVSNNF (137 aa). Polar residues-rich tracts occupy residues 49–60 and 119–138; these read NADNSAGGNNPL and TSVSAESLNPTSAGSDSWTP. Ser120 is subject to Phosphoserine. 3',5'-cyclic AMP contacts are provided by residues 160–291, Glu238, Arg247, 292–405, Glu359, and Arg368; these read LFSH…EEVP and LLSS…TEYS.

This sequence belongs to the cAMP-dependent kinase regulatory chain family. In terms of assembly, tetramer, composed of 2 regulatory (R) and 2 catalytic (C) subunits. In the presence of cAMP it dissociates into 2 active monomeric C subunits and an R dimer.

The polypeptide is cAMP-dependent protein kinase regulatory subunit (pkaR) (Emericella nidulans (strain FGSC A4 / ATCC 38163 / CBS 112.46 / NRRL 194 / M139) (Aspergillus nidulans)).